A 203-amino-acid chain; its full sequence is Flagellar transcriptional regulator FlhC (203 aa).

Residues cysteine 161, cysteine 164, cysteine 181, and cysteine 184 each coordinate Zn(2+).

It belongs to the FlhC family. In terms of assembly, heterohexamer composed of two FlhC and four FlhD subunits. Each FlhC binds a FlhD dimer, forming a heterotrimer, and a hexamer assembles by dimerization of two heterotrimers. Zn(2+) is required as a cofactor.

It localises to the cytoplasm. Its function is as follows. Functions in complex with FlhD as a master transcriptional regulator that regulates transcription of several flagellar and non-flagellar operons by binding to their promoter region. Activates expression of class 2 flagellar genes, including fliA, which is a flagellum-specific sigma factor that turns on the class 3 genes. Also regulates genes whose products function in a variety of physiological pathways. The sequence is that of Flagellar transcriptional regulator FlhC from Cupriavidus necator (strain ATCC 17699 / DSM 428 / KCTC 22496 / NCIMB 10442 / H16 / Stanier 337) (Ralstonia eutropha).